The primary structure comprises 581 residues: 2-succinyl-5-enolpyruvyl-6-hydroxy-3-cyclohexene-1-carboxylate synthase (581 aa).

This sequence belongs to the TPP enzyme family. MenD subfamily. As to quaternary structure, homodimer. Mg(2+) serves as cofactor. Requires Mn(2+) as cofactor. The cofactor is thiamine diphosphate.

It catalyses the reaction isochorismate + 2-oxoglutarate + H(+) = 5-enolpyruvoyl-6-hydroxy-2-succinyl-cyclohex-3-ene-1-carboxylate + CO2. Its pathway is quinol/quinone metabolism; 1,4-dihydroxy-2-naphthoate biosynthesis; 1,4-dihydroxy-2-naphthoate from chorismate: step 2/7. It functions in the pathway quinol/quinone metabolism; menaquinone biosynthesis. Catalyzes the thiamine diphosphate-dependent decarboxylation of 2-oxoglutarate and the subsequent addition of the resulting succinic semialdehyde-thiamine pyrophosphate anion to isochorismate to yield 2-succinyl-5-enolpyruvyl-6-hydroxy-3-cyclohexene-1-carboxylate (SEPHCHC). The protein is 2-succinyl-5-enolpyruvyl-6-hydroxy-3-cyclohexene-1-carboxylate synthase of Psychromonas ingrahamii (strain DSM 17664 / CCUG 51855 / 37).